The sequence spans 444 residues: Tol-Pal system protein TolB (444 aa).

A signal peptide spans 1 to 18; the sequence is MRNIIYFILLLFSCTGYA.

This sequence belongs to the TolB family. In terms of assembly, the Tol-Pal system is composed of five core proteins: the inner membrane proteins TolA, TolQ and TolR, the periplasmic protein TolB and the outer membrane protein Pal. They form a network linking the inner and outer membranes and the peptidoglycan layer.

The protein localises to the periplasm. In terms of biological role, part of the Tol-Pal system, which plays a role in outer membrane invagination during cell division and is important for maintaining outer membrane integrity. This chain is Tol-Pal system protein TolB, found in Rickettsia canadensis (strain McKiel).